A 765-amino-acid chain; its full sequence is 5-methyltetrahydropteroyltriglutamate--homocysteine methyltransferase (765 aa).

5-methyltetrahydropteroyltri-L-glutamate is bound by residues 18–21 and Lys-114; that span reads REWK. L-homocysteine is bound by residues 437 to 439 and Glu-490; that span reads IGS. L-methionine contacts are provided by residues 437–439 and Glu-490; that span reads IGS. Trp-567 contacts 5-methyltetrahydropteroyltri-L-glutamate. Asp-605 is an L-homocysteine binding site. Residue Asp-605 participates in L-methionine binding. Glu-611 contacts 5-methyltetrahydropteroyltri-L-glutamate. Residues His-647, Cys-649, and Glu-671 each coordinate Zn(2+). His-700 acts as the Proton donor in catalysis. Cys-732 contacts Zn(2+).

Belongs to the vitamin-B12 independent methionine synthase family. The cofactor is Zn(2+).

The catalysed reaction is 5-methyltetrahydropteroyltri-L-glutamate + L-homocysteine = tetrahydropteroyltri-L-glutamate + L-methionine. It participates in amino-acid biosynthesis; L-methionine biosynthesis via de novo pathway; L-methionine from L-homocysteine (MetE route): step 1/1. In terms of biological role, catalyzes the transfer of a methyl group from 5-methyltetrahydrofolate to homocysteine resulting in methionine formation. The polypeptide is 5-methyltetrahydropteroyltriglutamate--homocysteine methyltransferase (Listeria welshimeri serovar 6b (strain ATCC 35897 / DSM 20650 / CCUG 15529 / CIP 8149 / NCTC 11857 / SLCC 5334 / V8)).